The primary structure comprises 486 residues: Ribulose bisphosphate carboxylase large chain (486 aa).

Substrate is bound by residues Asn126 and Thr176. The Proton acceptor role is filled by Lys178. Lys180 is a substrate binding site. 3 residues coordinate Mg(2+): Lys204, Asp206, and Glu207. Lys204 is subject to N6-carboxylysine. His296 functions as the Proton acceptor in the catalytic mechanism. Residues Arg297, His329, and Ser381 each contribute to the substrate site.

The protein belongs to the RuBisCO large chain family. Type I subfamily. As to quaternary structure, heterohexadecamer of 8 large chains and 8 small chains. Requires Mg(2+) as cofactor.

It carries out the reaction 2 (2R)-3-phosphoglycerate + 2 H(+) = D-ribulose 1,5-bisphosphate + CO2 + H2O. It catalyses the reaction D-ribulose 1,5-bisphosphate + O2 = 2-phosphoglycolate + (2R)-3-phosphoglycerate + 2 H(+). In terms of biological role, ruBisCO catalyzes two reactions: the carboxylation of D-ribulose 1,5-bisphosphate, the primary event in carbon dioxide fixation, as well as the oxidative fragmentation of the pentose substrate. Both reactions occur simultaneously and in competition at the same active site. The sequence is that of Ribulose bisphosphate carboxylase large chain from Rhizobium meliloti (strain 1021) (Ensifer meliloti).